Consider the following 838-residue polypeptide: Protein P (838 aa).

A terminal protein domain (TP) region spans residues 1 to 177 (MPLSYQHFRK…FCGSPYSWEQ (177 aa)). The interval 178-341 (ELQHQTSTRH…YCLTHIVNLL (164 aa)) is spacer. Disordered regions lie at residues 215 to 238 (QSRLGLQPQQGSMARGKSGRSGSI) and 285 to 311 (STSKRQSSSGHAVEFHNIPPSSARSQS). A compositionally biased stretch (polar residues) spans 285–294 (STSKRQSSSG). The polymerase/reverse transcriptase domain (RT) stretch occupies residues 342 to 685 (EDWGPCTEHG…YLHLYPVARQ (344 aa)). A Reverse transcriptase domain is found at 352-595 (EHNIRIPRTP…YSLNFMGYVI (244 aa)). Residues Asp-424, Asp-546, and Asp-547 each contribute to the Mg(2+) site.

It belongs to the hepadnaviridae P protein family.

It catalyses the reaction DNA(n) + a 2'-deoxyribonucleoside 5'-triphosphate = DNA(n+1) + diphosphate. It carries out the reaction Endonucleolytic cleavage to 5'-phosphomonoester.. Its activity is regulated as follows. Activated by host HSP70 and HSP40 in vitro to be able to bind the epsilon loop of the pgRNA. Because deletion of the RNase H region renders the protein partly chaperone-independent, the chaperones may be needed indirectly to relieve occlusion of the RNA-binding site by this domain. Inhibited by several reverse-transcriptase inhibitors: Lamivudine, Adefovir and Entecavir. Multifunctional enzyme that converts the viral RNA genome into dsDNA in viral cytoplasmic capsids. This enzyme displays a DNA polymerase activity that can copy either DNA or RNA templates, and a ribonuclease H (RNase H) activity that cleaves the RNA strand of RNA-DNA heteroduplexes in a partially processive 3'- to 5'-endonucleasic mode. Neo-synthesized pregenomic RNA (pgRNA) are encapsidated together with the P protein, and reverse-transcribed inside the nucleocapsid. Initiation of reverse-transcription occurs first by binding the epsilon loop on the pgRNA genome, and is initiated by protein priming, thereby the 5'-end of (-)DNA is covalently linked to P protein. Partial (+)DNA is synthesized from the (-)DNA template and generates the relaxed circular DNA (RC-DNA) genome. After budding and infection, the RC-DNA migrates in the nucleus, and is converted into a plasmid-like covalently closed circular DNA (cccDNA). The activity of P protein does not seem to be necessary for cccDNA generation, and is presumably released from (+)DNA by host nuclear DNA repair machinery. This chain is Protein P, found in Homo sapiens (Human).